A 1488-amino-acid chain; its full sequence is Chromosome partition protein MukB (1488 aa).

34-41 (GGNGAGKS) contacts ATP. Coiled-coil stretches lie at residues 326–418 (LEAD…QYNQ), 444–472 (LDTF…QTAH), and 509–602 (RHLA…RRAP). The flexible hinge stretch occupies residues 666 to 783 (PGGAEDQRLN…SLPIFGRAAR (118 aa)). Coiled-coil stretches lie at residues 835–923 (EAEI…AKLE), 977–1116 (EMLS…AKAG), and 1209–1265 (VEAI…LQSV). Residues 1049–1074 (ADSGAEERARQRRDELHAQLSNNRSR) are disordered. Residues 1051 to 1065 (SGAEERARQRRDELH) show a composition bias toward basic and acidic residues.

Belongs to the SMC family. MukB subfamily. In terms of assembly, homodimerization via its hinge domain. Binds to DNA via its C-terminal region. Interacts, and probably forms a ternary complex, with MukE and MukF via its C-terminal region. The complex formation is stimulated by calcium or magnesium. Interacts with tubulin-related protein FtsZ.

It is found in the cytoplasm. The protein localises to the nucleoid. Functionally, plays a central role in chromosome condensation, segregation and cell cycle progression. Functions as a homodimer, which is essential for chromosome partition. Involved in negative DNA supercoiling in vivo, and by this means organize and compact chromosomes. May achieve or facilitate chromosome segregation by condensation DNA from both sides of a centrally located replisome during cell division. The chain is Chromosome partition protein MukB from Salmonella agona (strain SL483).